The sequence spans 329 residues: Malate dehydrogenase (329 aa).

12–18 contributes to the NAD(+) binding site; sequence GAAGQIG. Residues R95 and R101 each contribute to the substrate site. Residues N108, Q115, and 132 to 134 contribute to the NAD(+) site; that span reads VGN. Substrate contacts are provided by N134 and R165. Residue H190 is the Proton acceptor of the active site.

This sequence belongs to the LDH/MDH superfamily. MDH type 2 family.

It carries out the reaction (S)-malate + NAD(+) = oxaloacetate + NADH + H(+). In terms of biological role, catalyzes the reversible oxidation of malate to oxaloacetate. The sequence is that of Malate dehydrogenase from Janthinobacterium sp. (strain Marseille) (Minibacterium massiliensis).